Consider the following 220-residue polypeptide: Large ribosomal subunit protein uL16 (220 aa).

It belongs to the universal ribosomal protein uL16 family. In terms of assembly, component of the small ribosomal subunit. Mature ribosomes consist of a small (40S) and a large (60S) subunit. The 40S subunit contains about 33 different proteins and 1 molecule of RNA (18S). The 60S subunit contains about 49 different proteins and 3 molecules of RNA (25S, 5.8S and 5S).

The polypeptide is Large ribosomal subunit protein uL16 (RPL10) (Zea mays (Maize)).